Here is a 60-residue protein sequence, read N- to C-terminus: Large ribosomal subunit protein bL33 (60 aa).

This sequence belongs to the bacterial ribosomal protein bL33 family.

The protein is Large ribosomal subunit protein bL33 of Chlorobium chlorochromatii (strain CaD3).